The following is a 68-amino-acid chain: Antimicrobial peptide UyCT3 (68 aa).

A signal peptide spans 1–23; that stretch reads MKNQFVLLLLAIVFLQMIFQSDA. Phe-36 is modified (phenylalanine amide). Positions 40–68 are excised as a propeptide; sequence GLENMDKFDELFDGDLSEADLDFLKELMR.

The protein belongs to the non-disulfide-bridged peptide (NDBP) superfamily. Short antimicrobial peptide (group 4) family. In terms of processing, the non-amidated UyCT3 does not show antimicrobial activity. As to expression, expressed by the venom gland.

Its subcellular location is the secreted. The protein localises to the target cell membrane. Antimicrobial peptide that inhibits the growth of Gram-positive (S.aureus, MIC=10 uM) and Gram-negative bacteria (E.coli, MIC=15 uM and P.aeruginosa, MIC=6 uM). It also shows 35% of hemolysis when 15 uM are tested (95% at 50 uM). The polypeptide is Antimicrobial peptide UyCT3 (Urodacus yaschenkoi (Inland robust scorpion)).